The chain runs to 197 residues: MIDKNDITGLILAGGRASRMGSVDKGLQNFHGMPLAMHTLLRLGPQVGDIMINANRNLAAYEAMGAPVWPDALPDFPGPLAGFAAGLERCETPYMVTAPCDTPNFPADMVSRLADALIAEGAQIAMAATTADGALRTQPVFCLMRIDLLDSLLEFLHSGQRKTEIWANQHRCAIVRFDDAQAFAGANTLAELRQLQS.

GTP contacts are provided by residues 12-14 (LAG), Lys-25, Asn-53, Asp-71, and Asp-101. Position 101 (Asp-101) interacts with Mg(2+).

The protein belongs to the MobA family. In terms of assembly, monomer. The cofactor is Mg(2+).

Its subcellular location is the cytoplasm. It carries out the reaction Mo-molybdopterin + GTP + H(+) = Mo-molybdopterin guanine dinucleotide + diphosphate. Transfers a GMP moiety from GTP to Mo-molybdopterin (Mo-MPT) cofactor (Moco or molybdenum cofactor) to form Mo-molybdopterin guanine dinucleotide (Mo-MGD) cofactor. This Bordetella pertussis (strain Tohama I / ATCC BAA-589 / NCTC 13251) protein is Molybdenum cofactor guanylyltransferase.